Consider the following 71-residue polypeptide: Exodeoxyribonuclease 7 small subunit (71 aa).

The protein belongs to the XseB family. In terms of assembly, heterooligomer composed of large and small subunits.

The protein localises to the cytoplasm. The enzyme catalyses Exonucleolytic cleavage in either 5'- to 3'- or 3'- to 5'-direction to yield nucleoside 5'-phosphates.. Bidirectionally degrades single-stranded DNA into large acid-insoluble oligonucleotides, which are then degraded further into small acid-soluble oligonucleotides. The polypeptide is Exodeoxyribonuclease 7 small subunit (Streptococcus suis (strain 98HAH33)).